The following is a 221-amino-acid chain: Ras-related protein Rab-27A (221 aa).

Ser-2 carries the N-acetylserine modification. Ser-2 carries the post-translational modification Phosphoserine. GTP is bound at residue 16–24 (GDSGVGKTS). Positions 38-46 (FITTVGIDF) match the Effector region motif. GTP-binding positions include 74–78 (DTAGQ), 133–136 (NKSD), and 163–165 (SAA). Cys-123 and Cys-188 form a disulfide bridge. A disordered region spans residues 202-221 (NGHTSADPLNEEKEKGSCGC). Positions 211–221 (NEEKEKGSCGC) are enriched in basic and acidic residues. Residues Cys-219 and Cys-221 are each lipidated (S-geranylgeranyl cysteine). The residue at position 221 (Cys-221) is a Cysteine methyl ester.

Belongs to the small GTPase superfamily. Rab family. In terms of assembly, binds SYTL1, SLAC2B, MYRIP, SYTL3, SYTL4 and SYTL5. Interacts with RPH3A and RPH3A. Binds MLPH and SYTL2. Interacts with UNC13D. Does not interact with the BLOC-3 complex (heterodimer of HPS1 and HPS4). Interacts (GDP-bound form preferentially) with DENND10.

Its subcellular location is the membrane. It localises to the melanosome. The protein resides in the late endosome. It is found in the lysosome. It catalyses the reaction GTP + H2O = GDP + phosphate + H(+). Its activity is regulated as follows. Regulated by guanine nucleotide exchange factors (GEFs) which promote the exchange of bound GDP for free GTP, GTPase activating proteins (GAPs) which increase the GTP hydrolysis activity, and GDP dissociation inhibitors which inhibit the dissociation of the nucleotide from the GTPase. Activated by GEFs such as DENND10. Small GTPase which cycles between active GTP-bound and inactive GDP-bound states. In its active state, binds to a variety of effector proteins to regulate homeostasis of late endocytic pathway, including endosomal positioning, maturation and secretion. Plays a role in cytotoxic granule exocytosis in lymphocytes. Required for both granule maturation and granule docking and priming at the immunologic synapse. The polypeptide is Ras-related protein Rab-27A (RAB27A) (Sus scrofa (Pig)).